The following is a 702-amino-acid chain: NAD(P)H-quinone oxidoreductase subunit 5, chloroplastic (702 aa).

15 helical membrane-spanning segments follow: residues 1 to 21 (WVIP…LFFI), 31 to 51 (IWAF…VHLS), 81 to 101 (IDPL…LVLI), 117 to 137 (FVYI…SNLI), 139 to 159 (IYFF…FWFT), 177 to 197 (GDFG…SLEF), 211 to 231 (NGIN…GAVA), 250 to 270 (TPIS…FLLA), 272 to 292 (LFPL…VGTI), 319 to 339 (LGYM…FHLI), 346 to 366 (ALLF…VGYS), 388 to 408 (TTFL…CFWS), 417 to 437 (WLYS…TAFY), 534 to 554 (LFPL…GISF), and 602 to 622 (SLAI…YSFF).

Belongs to the complex I subunit 5 family. In terms of assembly, NDH is composed of at least 16 different subunits, 5 of which are encoded in the nucleus.

It localises to the plastid. It is found in the chloroplast thylakoid membrane. It carries out the reaction a plastoquinone + NADH + (n+1) H(+)(in) = a plastoquinol + NAD(+) + n H(+)(out). The enzyme catalyses a plastoquinone + NADPH + (n+1) H(+)(in) = a plastoquinol + NADP(+) + n H(+)(out). In terms of biological role, NDH shuttles electrons from NAD(P)H:plastoquinone, via FMN and iron-sulfur (Fe-S) centers, to quinones in the photosynthetic chain and possibly in a chloroplast respiratory chain. The immediate electron acceptor for the enzyme in this species is believed to be plastoquinone. Couples the redox reaction to proton translocation, and thus conserves the redox energy in a proton gradient. The protein is NAD(P)H-quinone oxidoreductase subunit 5, chloroplastic (ndhF) of Poa pratensis (Kentucky bluegrass).